Consider the following 302-residue polypeptide: GTPase Era (302 aa).

One can recognise an Era-type G domain in the interval 9 to 177 (YCGFIAIVGR…EKIVRQSLRE (169 aa)). The segment at 17 to 24 (GRPNVGKS) is G1. 17-24 (GRPNVGKS) serves as a coordination point for GTP. The G2 stretch occupies residues 43–47 (QTTRH). The interval 64–67 (DTPG) is G3. Residues 64-68 (DTPGL) and 126-129 (NKVD) each bind GTP. Positions 126 to 129 (NKVD) are G4. Positions 156–158 (ISA) are G5. Positions 208 to 285 (TGEELPYSVT…HLELWVKVKS (78 aa)) constitute a KH type-2 domain.

This sequence belongs to the TRAFAC class TrmE-Era-EngA-EngB-Septin-like GTPase superfamily. Era GTPase family. In terms of assembly, monomer.

It is found in the cytoplasm. Its subcellular location is the cell inner membrane. Its function is as follows. An essential GTPase that binds both GDP and GTP, with rapid nucleotide exchange. Plays a role in 16S rRNA processing and 30S ribosomal subunit biogenesis and possibly also in cell cycle regulation and energy metabolism. This Haemophilus influenzae (strain PittGG) protein is GTPase Era.